The sequence spans 379 residues: Cytochrome b (379 aa).

The next 4 helical transmembrane spans lie at 33–53 (FGSL…FLAM), 77–98 (WTIR…FIHV), 113–133 (WNIG…GYVL), and 178–198 (FFAL…IHLL). Positions 83 and 97 each coordinate heme b. Heme b contacts are provided by His182 and His196. Position 201 (His201) interacts with a ubiquinone. 4 helical membrane-spanning segments follow: residues 226-246 (TKDF…TLFY), 288-308 (PGGV…PFLQ), 320-340 (LSQF…WIGG), and 347-367 (FISI…FIMP).

This sequence belongs to the cytochrome b family. As to quaternary structure, the cytochrome bc1 complex contains 11 subunits: 3 respiratory subunits (MT-CYB, CYC1 and UQCRFS1), 2 core proteins (UQCRC1 and UQCRC2) and 6 low-molecular weight proteins (UQCRH/QCR6, UQCRB/QCR7, UQCRQ/QCR8, UQCR10/QCR9, UQCR11/QCR10 and a cleavage product of UQCRFS1). This cytochrome bc1 complex then forms a dimer. The cofactor is heme b.

Its subcellular location is the mitochondrion inner membrane. In terms of biological role, component of the ubiquinol-cytochrome c reductase complex (complex III or cytochrome b-c1 complex) that is part of the mitochondrial respiratory chain. The b-c1 complex mediates electron transfer from ubiquinol to cytochrome c. Contributes to the generation of a proton gradient across the mitochondrial membrane that is then used for ATP synthesis. This Lepilemur ruficaudatus (Red-tailed sportive lemur) protein is Cytochrome b (MT-CYB).